The following is a 49-amino-acid chain: DNA-directed RNA polymerase subunit Rpo12 (49 aa).

Zn(2+)-binding residues include C11, C27, and C30.

The protein belongs to the archaeal Rpo12/eukaryotic RPC10 RNA polymerase subunit family. Part of the RNA polymerase complex. Requires Zn(2+) as cofactor.

The protein resides in the cytoplasm. It localises to the chromosome. The enzyme catalyses RNA(n) + a ribonucleoside 5'-triphosphate = RNA(n+1) + diphosphate. Its function is as follows. DNA-dependent RNA polymerase (RNAP) catalyzes the transcription of DNA into RNA using the four ribonucleoside triphosphates as substrates. The polypeptide is DNA-directed RNA polymerase subunit Rpo12 (Thermococcus kodakarensis (strain ATCC BAA-918 / JCM 12380 / KOD1) (Pyrococcus kodakaraensis (strain KOD1))).